Reading from the N-terminus, the 31-residue chain is Glucagon-3 (31 aa).

Belongs to the glucagon family.

The protein resides in the secreted. Its function is as follows. Glucagon plays a key role in glucose metabolism and homeostasis. Regulates blood glucose by increasing gluconeogenesis and decreasing glycolysis. In Huso dauricus (Kaluga sturgeon), this protein is Glucagon-3.